The chain runs to 128 residues: Nucleoside diphosphate kinase B (128 aa).

N-acetylmethionine is present on methionine 1. ATP contacts are provided by lysine 9, phenylalanine 39, threonine 70, arginine 81, and asparagine 91. Catalysis depends on histidine 94, which acts as the Pros-phosphohistidine intermediate.

Belongs to the NDK family. Mg(2+) is required as a cofactor.

The protein localises to the cytoplasm. Its subcellular location is the nucleus. The protein resides in the cell projection. It localises to the lamellipodium. It is found in the ruffle. It catalyses the reaction a 2'-deoxyribonucleoside 5'-diphosphate + ATP = a 2'-deoxyribonucleoside 5'-triphosphate + ADP. The enzyme catalyses a ribonucleoside 5'-diphosphate + ATP = a ribonucleoside 5'-triphosphate + ADP. Its function is as follows. Major role in the synthesis of nucleoside triphosphates other than ATP. This is Nucleoside diphosphate kinase B (nme2) from Merluccius bilinearis (Silver hake).